We begin with the raw amino-acid sequence, 68 residues long: Large ribosomal subunit protein uL30 (68 aa).

Belongs to the universal ribosomal protein uL30 family. In terms of assembly, part of the 50S ribosomal subunit.

This is Large ribosomal subunit protein uL30 from Pseudarthrobacter chlorophenolicus (strain ATCC 700700 / DSM 12829 / CIP 107037 / JCM 12360 / KCTC 9906 / NCIMB 13794 / A6) (Arthrobacter chlorophenolicus).